Here is a 500-residue protein sequence, read N- to C-terminus: Galactofuranose transporter ATP-binding protein YtfR (500 aa).

2 consecutive ABC transporter domains span residues L10–E245 and L259–A497. G42–S49 contributes to the ATP binding site.

This sequence belongs to the ABC transporter superfamily. In terms of assembly, the complex is composed of two ATP-binding proteins (YtfR), two transmembrane proteins (YtfT and YjfF) and a solute-binding protein (YtfQ).

The protein localises to the cell inner membrane. It carries out the reaction D-galactofuranose(out) + ATP + H2O = D-galactofuranose(in) + ADP + phosphate + H(+). Its function is as follows. Part of the ABC transporter complex YtfQRT-YjfF involved in galactofuranose transport. Responsible for energy coupling to the transport system. The polypeptide is Galactofuranose transporter ATP-binding protein YtfR (ytfR) (Escherichia coli (strain K12)).